The chain runs to 1119 residues: uncharacterized protein (1119 aa).

The signal sequence occupies residues 1–21 (MNNIYISLYIFFISYIIQLCF). The stretch at 170 to 206 (NKKKLDKEKKKNVIELKEYLEDLKKRMFDMQKRLNDI) forms a coiled coil. Disordered regions lie at residues 606–627 (NNNT…IFNN) and 782–905 (ASVQ…EHDE). Over residues 788–891 (DKGEDNNDND…EKDKSRDDNK (104 aa)) the composition is skewed to basic and acidic residues. A coiled-coil region spans residues 890–920 (NKAQNNNSTDNEEHDEITEQIGFLKNHNQKY).

This is an uncharacterized protein from Plasmodium falciparum (isolate 3D7).